Reading from the N-terminus, the 328-residue chain is MDFKNKKWLFLAPLAGYTDLPFRSVVKKFGVDVTTSEMVSSHSLVYAFDKTSKMLEKSPLEDHFMAQISGSKESVVKEAVEKINALEHVNGIDFNCGCPAPKVANHGNGSGLLKDLNHLVKLLKTIRENTSKKITSVKVRLGFEKKIPKEIAHALNDAPVDYVVVHGRTRSDKYQKDKIDYESIALMKKILKKPVIANGEIDSVKKAFEVLQITQADGLMIGRAALRAPWIFWQIRNNTTKLPAVVKKDLVLEHFDKMVEFYGDMGVIMFRKNLHAYAKGEMQASAFRNCVNTLTEIKSMRESIEEFFNQEMLQSEVPLWVELNQKSV.

Residues 13–15 (PLA) and Gln67 contribute to the FMN site. Residue Cys98 is the Proton donor of the active site. FMN-binding positions include Lys138, 198-200 (NGE), and 222-223 (GR).

The protein belongs to the Dus family. Requires FMN as cofactor.

It catalyses the reaction a 5,6-dihydrouridine in tRNA + NAD(+) = a uridine in tRNA + NADH + H(+). It carries out the reaction a 5,6-dihydrouridine in tRNA + NADP(+) = a uridine in tRNA + NADPH + H(+). Catalyzes the synthesis of 5,6-dihydrouridine (D), a modified base found in the D-loop of most tRNAs, via the reduction of the C5-C6 double bond in target uridines. In Helicobacter pylori (strain ATCC 700392 / 26695) (Campylobacter pylori), this protein is Probable tRNA-dihydrouridine synthase (dus).